The chain runs to 433 residues: Enolase (433 aa).

Glutamine 167 provides a ligand contact to (2R)-2-phosphoglycerate. Residue glutamate 209 is the Proton donor of the active site. Mg(2+)-binding residues include aspartate 246, glutamate 291, and aspartate 318. Residue lysine 326 is modified to N6-acetyllysine. 4 residues coordinate (2R)-2-phosphoglycerate: lysine 343, arginine 372, serine 373, and lysine 394. The Proton acceptor role is filled by lysine 343. Position 343 is an N6-(2-hydroxyisobutyryl)lysine (lysine 343).

The protein belongs to the enolase family. In terms of assembly, component of the RNA degradosome, a multiprotein complex involved in RNA processing and mRNA degradation. Requires Mg(2+) as cofactor. Acetylated and 2-hydroxyisobutyrylated at Lys-326 and Lys-343, respectively, reducing the enolase activity. Deacetylated and de-2-hydroxyisobutyrylated by NpdA/CobB, increasing the enolase activity.

The protein resides in the cytoplasm. Its subcellular location is the secreted. It localises to the cell surface. It catalyses the reaction (2R)-2-phosphoglycerate = phosphoenolpyruvate + H2O. The protein operates within carbohydrate degradation; glycolysis; pyruvate from D-glyceraldehyde 3-phosphate: step 4/5. In terms of biological role, catalyzes the reversible conversion of 2-phosphoglycerate (2-PG) into phosphoenolpyruvate (PEP). It is essential for the degradation of carbohydrates via glycolysis. This Proteus mirabilis (strain HI4320) protein is Enolase.